Reading from the N-terminus, the 498-residue chain is WD repeat-containing protein 55 homolog (498 aa).

Positions 1–131 (MHTHNNFKTP…ATFDLDEDDE (131 aa)) are disordered. 2 stretches are compositionally biased toward acidic residues: residues 12–23 (DEDELDDLDEDM) and 31–48 (IEQEVLNESDSDNDEYDL). 2 stretches are compositionally biased toward low complexity: residues 67 to 82 (NDSSSSDDSFDPNAAD) and 93 to 103 (AGGVTAGGATS). 6 WD repeats span residues 154 to 193 (KLEDFITDICFHPDRDIIALATIIGDVHLYEYDNEANKLL), 198 to 237 (VHSKACRDVEFTEDGRFLLTCSKDKCVMVTDMETEKLKKL), 241 to 279 (AHDDAINTLHVLNENLFASGDDAGTVKLWDLRTKNAIFE), 282 to 321 (ELEDQITQLTTNEQSKLLLATSADGYLTTFNISARKMYVQ), 324 to 363 (PYEEELNCMGVYRGDSKLVVGTSKGRLYTYNWGQFGYHCD), and 408 to 447 (QHNMPIESLDVNASGELIASSSHNNDVRFWNVKYFEDFGD). The interval 478-498 (DLTKENADGDDDPGAGPSNMA) is disordered.

The protein belongs to the WD repeat WDR55 family.

The polypeptide is WD repeat-containing protein 55 homolog (Drosophila melanogaster (Fruit fly)).